Reading from the N-terminus, the 156-residue chain is Small ribosomal subunit protein uS7 (156 aa).

This sequence belongs to the universal ribosomal protein uS7 family. Part of the 30S ribosomal subunit. Contacts proteins S9 and S11.

One of the primary rRNA binding proteins, it binds directly to 16S rRNA where it nucleates assembly of the head domain of the 30S subunit. Is located at the subunit interface close to the decoding center, probably blocks exit of the E-site tRNA. The sequence is that of Small ribosomal subunit protein uS7 from Jannaschia sp. (strain CCS1).